The following is a 362-amino-acid chain: Biotin synthase (362 aa).

A Radical SAM core domain is found at 46 to 273; sequence NEVQVSTLLS…ASHVRLSAGR (228 aa). Residues cysteine 61, cysteine 65, and cysteine 68 each contribute to the [4Fe-4S] cluster site. Positions 105, 136, 196, and 268 each coordinate [2Fe-2S] cluster.

Belongs to the radical SAM superfamily. Biotin synthase family. As to quaternary structure, homodimer. Requires [4Fe-4S] cluster as cofactor. [2Fe-2S] cluster is required as a cofactor.

It carries out the reaction (4R,5S)-dethiobiotin + (sulfur carrier)-SH + 2 reduced [2Fe-2S]-[ferredoxin] + 2 S-adenosyl-L-methionine = (sulfur carrier)-H + biotin + 2 5'-deoxyadenosine + 2 L-methionine + 2 oxidized [2Fe-2S]-[ferredoxin]. It participates in cofactor biosynthesis; biotin biosynthesis; biotin from 7,8-diaminononanoate: step 2/2. Functionally, catalyzes the conversion of dethiobiotin (DTB) to biotin by the insertion of a sulfur atom into dethiobiotin via a radical-based mechanism. The protein is Biotin synthase of Aeromonas salmonicida (strain A449).